We begin with the raw amino-acid sequence, 107 residues long: Thioredoxin-1 (107 aa).

One can recognise a Thioredoxin domain in the interval 2–106 (ASVRTMNDYH…LTNMMAKLVK (105 aa)). Catalysis depends on nucleophile residues Cys-31 and Cys-34. Residues Cys-31 and Cys-34 are joined by a disulfide bond.

Belongs to the thioredoxin family. In terms of tissue distribution, ovary specific. Expressed present in the nurse cells from stage 9 of ovary development and is transported into the oocyte. Expressed throughout oogenesis.

It is found in the nucleus. Functionally, participates in various redox reactions through the reversible oxidation of its active center dithiol to a disulfide and catalyzes dithiol-disulfide exchange reactions. As a reducing substrate of peroxiredoxin 1, thioredoxin 2 is preferred over thioredoxin 1. Required for female meiosis and early embryonic development. This is Thioredoxin-1 (dhd) from Drosophila melanogaster (Fruit fly).